The sequence spans 279 residues: Lectin 9 (279 aa).

The N-terminal stretch at 1–23 (MALSSALIKIFITFLFLQNHVNS) is a signal peptide. 4 N-linked (GlcNAc...) asparagine glycosylation sites follow: N116, N139, N235, and N272.

The protein belongs to the leguminous lectin family.

Its function is as follows. May be involved in arbuscular mycorrhizal (AM) symbiosis with AM fungi. The polypeptide is Lectin 9 (Medicago truncatula (Barrel medic)).